The primary structure comprises 124 residues: Testis-expressed protein 54 (124 aa).

Residues 1-10 show a composition bias toward basic and acidic residues; that stretch reads MGCCQDKDFE. Disordered stretches follow at residues 1–77 and 90–124; these read MGCC…SNES and FGRR…PEKG. The span at 11 to 30 shows a compositional bias: acidic residues; that stretch reads MSDEQSKEEESEDGREDETT. Composition is skewed to basic and acidic residues over residues 34 to 50 and 101 to 124; these read RGPR…RGEL and RQPD…PEKG.

As to expression, expressed in Testis.

The sequence is that of Testis-expressed protein 54 from Homo sapiens (Human).